The primary structure comprises 216 residues: Large ribosomal subunit protein uL3 (216 aa).

A disordered region spans residues 135–156 (LGASHGTQRKHRSPGSIGGCAT).

It belongs to the universal ribosomal protein uL3 family. As to quaternary structure, part of the 50S ribosomal subunit. Forms a cluster with proteins L14 and L19.

Its function is as follows. One of the primary rRNA binding proteins, it binds directly near the 3'-end of the 23S rRNA, where it nucleates assembly of the 50S subunit. This chain is Large ribosomal subunit protein uL3, found in Thermobifida fusca (strain YX).